The chain runs to 463 residues: MSTAKAPTLPASIFRAYDIRGVVGDTLTAETAYWIGRAIGSESLARGEPCVAVGRDGRLSGPELVKQLIQGLVDCGCQVSDVGMVPTPVLYYAANVLEGKSGVMLTGSHNPPDYNGFKIVVAGETLANEQIQALRERIEKNDLASGVGSVEQVDILPRYFKQIRDDIAMAKPMKVVVDCGNGVAGVIAPQLIEALGCSVIPLYCEVDGNFPNHHPDPGKPENLKDLIAKVKAENADLGLAFDGDGDRVGVVTNTGTIIYPDRLLMLFAKDVVSRNPGADIIFDVKCTRRLIALISGYGGRPVMWKTGHSLIKKKMKETGALLAGEMSGHVFFKERWFGFDDGIYSAARLLEILSQDQRDSEHVFSAFPSDISTPEINITVTEDSKFAIIEALQRDAQWGEGNITTLDGVRVDYPKGWGLVRASNTTPVLVLRFEADTEEELERIKTVFRNQLKAVDSSLPVPF.

An alpha-D-glucose 1-phosphate-binding site is contributed by Tyr-17. Alpha-D-mannose 1-phosphate is bound at residue Tyr-17. The active-site Non-phosphorylated intermediate is the Ser-108. Mg(2+)-binding residues include Ser-108, Asp-242, Asp-244, and Asp-246. Residue Ser-108 is modified to Phosphoserine. Alpha-D-glucose 1-phosphate is bound by residues Lys-285, His-308, 325–329, and 421–425; these read EMSGH and RASNT. Alpha-D-mannose 1-phosphate is bound by residues His-308, 325–329, and 421–425; these read EMSGH and RASNT.

It belongs to the phosphohexose mutase family. As to quaternary structure, monomer. Requires Mg(2+) as cofactor.

The catalysed reaction is alpha-D-mannose 1-phosphate = D-mannose 6-phosphate. It carries out the reaction alpha-D-glucose 1-phosphate = alpha-D-glucose 6-phosphate. It participates in nucleotide-sugar biosynthesis; GDP-alpha-D-mannose biosynthesis; alpha-D-mannose 1-phosphate from D-fructose 6-phosphate: step 2/2. Its pathway is bacterial outer membrane biogenesis; lipopolysaccharide biosynthesis. Highly reversible phosphoryltransferase. The phosphomannomutase activity produces a precursor for alginate polymerization, the alginate layer causes a mucoid phenotype and provides a protective barrier against host immune defenses and antibiotics. Also involved in core lipopolysaccaride (LPS) biosynthesis due to its phosphoglucomutase activity. Essential for rhamnolipid production, an exoproduct correlated with pathogenicity. Required for biofilm production. The reaction proceeds via 2 processive phosphoryl transferase reactions; first from enzyme-phospho-Ser-108 to the substrate (generating a bisphosphorylated substrate intermediate and a dephosphorylated enzyme), a 180 degree rotation of the intermediate (probably aided by movement of domain 4), and subsequent transfer of phosphate back to the enzyme. The chain is Phosphomannomutase/phosphoglucomutase (algC) from Pseudomonas aeruginosa (strain UCBPP-PA14).